Here is a 174-residue protein sequence, read N- to C-terminus: Frataxin homolog, mitochondrial (174 aa).

The N-terminal 21 residues, 1-21, are a transit peptide targeting the mitochondrion; that stretch reads MIKRSLASLVRVSSVMGRRYM.

This sequence belongs to the frataxin family. Monomer. Forms a 24-mer complex made up of 8 copies of a trimeric subcomplex. Increments in mitochondrial iron uptake induce stepwise assembly of species ranging from trimers to 24-mers. Interacts with ISU1 with a 1 to 1 stoichiometry; the interaction is direct. Interacts with YHB1, SDH1, SDH2, AIM45 and CIR1. Post-translationally, processed in two steps by mitochondrial processing peptidase (MPP). MPP first cleaves the precursor to intermediate form and subsequently converts the intermediate to mature size protein.

The protein resides in the mitochondrion matrix. It catalyses the reaction 4 Fe(2+) + O2 + 4 H(+) = 4 Fe(3+) + 2 H2O. Functionally, promotes the biosynthesis of heme as well as the assembly and repair of iron-sulfur clusters by delivering Fe(2+) to proteins involved in these pathways. Plays a role in the protection against iron-catalyzed oxidative stress through its ability to catalyze the oxidation of Fe(2+) to Fe(3+). Can store large amounts of the metal in the form of a ferrihydrite mineral by oligomerization. May be involved in regulation of the mitochondrial electron transport chain. In Saccharomyces cerevisiae (strain ATCC 204508 / S288c) (Baker's yeast), this protein is Frataxin homolog, mitochondrial.